The following is a 485-amino-acid chain: UDP-N-acetylmuramate--L-alanine ligase (485 aa).

120 to 126 (GSHGKTT) serves as a coordination point for ATP.

It belongs to the MurCDEF family.

The protein resides in the cytoplasm. It catalyses the reaction UDP-N-acetyl-alpha-D-muramate + L-alanine + ATP = UDP-N-acetyl-alpha-D-muramoyl-L-alanine + ADP + phosphate + H(+). It participates in cell wall biogenesis; peptidoglycan biosynthesis. Its function is as follows. Cell wall formation. The polypeptide is UDP-N-acetylmuramate--L-alanine ligase (Rickettsia massiliae (strain Mtu5)).